The sequence spans 876 residues: Alanine--tRNA ligase (876 aa).

Residues His-568, His-572, Cys-669, and His-673 each contribute to the Zn(2+) site.

This sequence belongs to the class-II aminoacyl-tRNA synthetase family. Zn(2+) serves as cofactor.

It is found in the cytoplasm. It catalyses the reaction tRNA(Ala) + L-alanine + ATP = L-alanyl-tRNA(Ala) + AMP + diphosphate. Catalyzes the attachment of alanine to tRNA(Ala) in a two-step reaction: alanine is first activated by ATP to form Ala-AMP and then transferred to the acceptor end of tRNA(Ala). Also edits incorrectly charged Ser-tRNA(Ala) and Gly-tRNA(Ala) via its editing domain. The chain is Alanine--tRNA ligase from Sulfurihydrogenibium sp. (strain YO3AOP1).